We begin with the raw amino-acid sequence, 320 residues long: Cytochrome f (320 aa).

Positions 1–35 are cleaved as a signal peptide; it reads MENRNTFSWVKEQMTRSISVSIMIYVITQTSISNA. The heme site is built by Tyr36, Cys56, Cys59, and His60. A helical membrane pass occupies residues 286 to 306; that stretch reads VQGLLFFFASVILAQVFLVLK.

This sequence belongs to the cytochrome f family. In terms of assembly, the 4 large subunits of the cytochrome b6-f complex are cytochrome b6, subunit IV (17 kDa polypeptide, petD), cytochrome f and the Rieske protein, while the 4 small subunits are PetG, PetL, PetM and PetN. The complex functions as a dimer. Requires heme as cofactor.

The protein localises to the plastid. The protein resides in the chloroplast thylakoid membrane. Component of the cytochrome b6-f complex, which mediates electron transfer between photosystem II (PSII) and photosystem I (PSI), cyclic electron flow around PSI, and state transitions. The protein is Cytochrome f of Agrostis stolonifera (Creeping bentgrass).